We begin with the raw amino-acid sequence, 502 residues long: Bifunctional purine biosynthesis protein PurH (502 aa).

The MGS-like domain occupies Met-1–Ser-144.

This sequence belongs to the PurH family.

The catalysed reaction is (6R)-10-formyltetrahydrofolate + 5-amino-1-(5-phospho-beta-D-ribosyl)imidazole-4-carboxamide = 5-formamido-1-(5-phospho-D-ribosyl)imidazole-4-carboxamide + (6S)-5,6,7,8-tetrahydrofolate. It catalyses the reaction IMP + H2O = 5-formamido-1-(5-phospho-D-ribosyl)imidazole-4-carboxamide. It participates in purine metabolism; IMP biosynthesis via de novo pathway; 5-formamido-1-(5-phospho-D-ribosyl)imidazole-4-carboxamide from 5-amino-1-(5-phospho-D-ribosyl)imidazole-4-carboxamide (10-formyl THF route): step 1/1. Its pathway is purine metabolism; IMP biosynthesis via de novo pathway; IMP from 5-formamido-1-(5-phospho-D-ribosyl)imidazole-4-carboxamide: step 1/1. The sequence is that of Bifunctional purine biosynthesis protein PurH from Clostridium beijerinckii (strain ATCC 51743 / NCIMB 8052) (Clostridium acetobutylicum).